A 158-amino-acid chain; its full sequence is Pyruvoyl-dependent arginine decarboxylase (158 aa).

A Pyruvic acid (Ser) modification is found at Ser44.

It belongs to the PdaD family. It depends on pyruvate as a cofactor.

It catalyses the reaction L-arginine + H(+) = agmatine + CO2. In Pyrococcus horikoshii (strain ATCC 700860 / DSM 12428 / JCM 9974 / NBRC 100139 / OT-3), this protein is Pyruvoyl-dependent arginine decarboxylase.